Consider the following 446-residue polypeptide: Phosphoglucosamine mutase (446 aa).

The Phosphoserine intermediate role is filled by serine 103. Mg(2+)-binding residues include serine 103, aspartate 242, aspartate 244, and aspartate 246. Serine 103 is modified (phosphoserine).

Belongs to the phosphohexose mutase family. Requires Mg(2+) as cofactor. In terms of processing, activated by phosphorylation.

The enzyme catalyses alpha-D-glucosamine 1-phosphate = D-glucosamine 6-phosphate. Its function is as follows. Catalyzes the conversion of glucosamine-6-phosphate to glucosamine-1-phosphate. The polypeptide is Phosphoglucosamine mutase (Vibrio cholerae serotype O1 (strain ATCC 39315 / El Tor Inaba N16961)).